Here is a 428-residue protein sequence, read N- to C-terminus: Probable protein phosphatase 2C 12 (428 aa).

Residues 24–293 form the PPM-type phosphatase domain; the sequence is KIDNPELIHG…DDTTCIVVDI (270 aa). Mn(2+) is bound by residues D69, G70, D245, and D284. Residues 301–331 form a disordered region; it reads ASVPPPKKQGKGMLKSMFKRKTSDSSSNIEK.

The protein belongs to the PP2C family. Mg(2+) is required as a cofactor. It depends on Mn(2+) as a cofactor.

The enzyme catalyses O-phospho-L-seryl-[protein] + H2O = L-seryl-[protein] + phosphate. The catalysed reaction is O-phospho-L-threonyl-[protein] + H2O = L-threonyl-[protein] + phosphate. The protein is Probable protein phosphatase 2C 12 of Arabidopsis thaliana (Mouse-ear cress).